Reading from the N-terminus, the 385-residue chain is Probable splicing factor YJU2B (385 aa).

Positions 1 to 26 are disordered; that stretch reads MGERKGQNKYYPPDFNPEKHGSLNRY. Phosphoserine is present on S40. The stretch at 182–214 forms a coiled coil; that stretch reads LNSMLRRHFREKKKAMQEEEEKDQALQAKASLA. A disordered region spans residues 257-385; sequence PSAQGPSASS…VADYSDSESE (129 aa). Residues 258–271 show a composition bias toward low complexity; that stretch reads SAQGPSASSSKASS. S306 carries the post-translational modification Phosphoserine. Residues 359–373 show a composition bias toward polar residues; sequence GSSQEDLLNPNTPNA.

The protein belongs to the CWC16 family.

It is found in the nucleus. Its function is as follows. May be involved in mRNA splicing. This Mus musculus (Mouse) protein is Probable splicing factor YJU2B (Yju2b).